Reading from the N-terminus, the 385-residue chain is 1-deoxy-D-xylulose 5-phosphate reductoisomerase (385 aa).

NADPH-binding residues include Thr-13, Gly-14, Ser-15, Ile-16, Asn-40, and Asn-122. Lys-123 contributes to the 1-deoxy-D-xylulose 5-phosphate binding site. An NADPH-binding site is contributed by Glu-124. Residue Asp-148 coordinates Mn(2+). Ser-149, Glu-150, Ser-177, and His-200 together coordinate 1-deoxy-D-xylulose 5-phosphate. Mn(2+) is bound at residue Glu-150. Residue Gly-206 participates in NADPH binding. Positions 213, 218, 219, and 222 each coordinate 1-deoxy-D-xylulose 5-phosphate. A Mn(2+)-binding site is contributed by Glu-222.

The protein belongs to the DXR family. Mg(2+) serves as cofactor. It depends on Mn(2+) as a cofactor.

It carries out the reaction 2-C-methyl-D-erythritol 4-phosphate + NADP(+) = 1-deoxy-D-xylulose 5-phosphate + NADPH + H(+). It participates in isoprenoid biosynthesis; isopentenyl diphosphate biosynthesis via DXP pathway; isopentenyl diphosphate from 1-deoxy-D-xylulose 5-phosphate: step 1/6. Catalyzes the NADPH-dependent rearrangement and reduction of 1-deoxy-D-xylulose-5-phosphate (DXP) to 2-C-methyl-D-erythritol 4-phosphate (MEP). This Francisella tularensis subsp. novicida (strain U112) protein is 1-deoxy-D-xylulose 5-phosphate reductoisomerase.